Reading from the N-terminus, the 207-residue chain is MSLLHRASFYISAARLDQLPPAGAPEVCFVGRSNAGKSSAINVLCNQRRLAFSSKTPGRTRLINMFGLPDPLAPGEQLGFLVDLPGYGYASVAHREKEKWADILGGYLRDRASLAGIVLLIDIRRGVTDLDRRLTNFIAPTGRPVLALLTKADKLPYGQRMRTVFAVRKDLADIGALHMVPFSSTERIGLEEAGAHIENWISPKVVP.

An EngB-type G domain is found at 23–203; it reads GAPEVCFVGR…GAHIENWISP (181 aa). GTP is bound by residues 31–38, 58–62, 83–86, 150–153, and 182–184; these read GRSNAGKS, GRTRL, DLPG, TKAD, and FSS. Positions 38 and 60 each coordinate Mg(2+).

It belongs to the TRAFAC class TrmE-Era-EngA-EngB-Septin-like GTPase superfamily. EngB GTPase family. The cofactor is Mg(2+).

Its function is as follows. Necessary for normal cell division and for the maintenance of normal septation. The protein is Probable GTP-binding protein EngB of Bordetella bronchiseptica (strain ATCC BAA-588 / NCTC 13252 / RB50) (Alcaligenes bronchisepticus).